A 161-amino-acid chain; its full sequence is Phosphopantetheine adenylyltransferase (161 aa).

Serine 9 is a substrate binding site. Residues 9-10 and histidine 17 each bind ATP; that span reads SF. Lysine 41, leucine 73, and lysine 87 together coordinate substrate. Residues 88–90, glutamate 98, and 122–128 contribute to the ATP site; these read GLR and FSFLSSS.

The protein belongs to the bacterial CoaD family. As to quaternary structure, homohexamer. The cofactor is Mg(2+).

It localises to the cytoplasm. The catalysed reaction is (R)-4'-phosphopantetheine + ATP + H(+) = 3'-dephospho-CoA + diphosphate. It functions in the pathway cofactor biosynthesis; coenzyme A biosynthesis; CoA from (R)-pantothenate: step 4/5. Reversibly transfers an adenylyl group from ATP to 4'-phosphopantetheine, yielding dephospho-CoA (dPCoA) and pyrophosphate. This chain is Phosphopantetheine adenylyltransferase, found in Nocardia farcinica (strain IFM 10152).